A 120-amino-acid polypeptide reads, in one-letter code: NAD(P)H-quinone oxidoreductase subunit 3, chloroplastic (120 aa).

The next 3 membrane-spanning stretches (helical) occupy residues Ile-9–Gly-29, Met-64–Met-84, and Ile-88–Leu-108.

It belongs to the complex I subunit 3 family. NDH is composed of at least 16 different subunits, 5 of which are encoded in the nucleus.

The protein localises to the plastid. The protein resides in the chloroplast thylakoid membrane. It catalyses the reaction a plastoquinone + NADH + (n+1) H(+)(in) = a plastoquinol + NAD(+) + n H(+)(out). It carries out the reaction a plastoquinone + NADPH + (n+1) H(+)(in) = a plastoquinol + NADP(+) + n H(+)(out). In terms of biological role, NDH shuttles electrons from NAD(P)H:plastoquinone, via FMN and iron-sulfur (Fe-S) centers, to quinones in the photosynthetic chain and possibly in a chloroplast respiratory chain. The immediate electron acceptor for the enzyme in this species is believed to be plastoquinone. Couples the redox reaction to proton translocation, and thus conserves the redox energy in a proton gradient. The chain is NAD(P)H-quinone oxidoreductase subunit 3, chloroplastic from Spinacia oleracea (Spinach).